The primary structure comprises 90 residues: Small ribosomal subunit protein bS16 (90 aa).

This sequence belongs to the bacterial ribosomal protein bS16 family.

This is Small ribosomal subunit protein bS16 from Fervidobacterium nodosum (strain ATCC 35602 / DSM 5306 / Rt17-B1).